Here is a 117-residue protein sequence, read N- to C-terminus: Prefoldin subunit beta (117 aa).

It belongs to the prefoldin subunit beta family. As to quaternary structure, heterohexamer of two alpha and four beta subunits.

It is found in the cytoplasm. Molecular chaperone capable of stabilizing a range of proteins. Seems to fulfill an ATP-independent, HSP70-like function in archaeal de novo protein folding. This is Prefoldin subunit beta (pfdB) from Methanosarcina acetivorans (strain ATCC 35395 / DSM 2834 / JCM 12185 / C2A).